The sequence spans 661 residues: Heme transporter BhuA (661 aa).

The signal sequence occupies residues 1 to 23 (MKFTRTLVLASTSLLATVATSQA). Residues 48-159 (KDNIEATGGT…AAGAIRYETV (112 aa)) enclose the TBDR plug domain. The 492-residue stretch at 170-661 (TFGARIIGSY…TFTFQTAFKF (492 aa)) folds into the TBDR beta-barrel domain.

It belongs to the TonB-dependent receptor family.

The protein localises to the cell outer membrane. Its function is as follows. Heme transporter. The chain is Heme transporter BhuA (bhuA) from Brucella abortus biovar 1 (strain 9-941).